Consider the following 395-residue polypeptide: Capsid protein (395 aa).

Residues 1-41 (MARKYAKRSKSRPRTARRSPKSRSRPRSRAPRRKAPSRPRI) show a composition bias toward basic residues. The interval 1–51 (MARKYAKRSKSRPRTARRSPKSRSRPRSRAPRRKAPSRPRIQRVNPVRRPM) is disordered. The Nuclear localization signal signature appears at 2–9 (ARKYAKRS).

It localises to the host nucleus. Its subcellular location is the virion. Self-assembles to form the virion icosahedral capsid. This chain is Capsid protein, found in Chaetoceros setoense (Chaetoceros setoense DNA virus).